Here is a 914-residue protein sequence, read N- to C-terminus: Isoleucine--tRNA ligase (914 aa).

The 'HIGH' region signature appears at 64–74 (PYANGNFHLGH). Glutamate 557 is an L-isoleucyl-5'-AMP binding site. A 'KMSKS' region motif is present at residues 598 to 602 (AMSKS). Lysine 601 contacts ATP. 4 residues coordinate Zn(2+): cysteine 889, cysteine 892, cysteine 906, and cysteine 909.

This sequence belongs to the class-I aminoacyl-tRNA synthetase family. IleS type 1 subfamily. Monomer. Requires Zn(2+) as cofactor.

The protein localises to the cytoplasm. It carries out the reaction tRNA(Ile) + L-isoleucine + ATP = L-isoleucyl-tRNA(Ile) + AMP + diphosphate. Its function is as follows. Catalyzes the attachment of isoleucine to tRNA(Ile). As IleRS can inadvertently accommodate and process structurally similar amino acids such as valine, to avoid such errors it has two additional distinct tRNA(Ile)-dependent editing activities. One activity is designated as 'pretransfer' editing and involves the hydrolysis of activated Val-AMP. The other activity is designated 'posttransfer' editing and involves deacylation of mischarged Val-tRNA(Ile). This Leptospira borgpetersenii serovar Hardjo-bovis (strain JB197) protein is Isoleucine--tRNA ligase.